A 1353-amino-acid polypeptide reads, in one-letter code: Xanthine dehydrogenase 2 (1353 aa).

The 2Fe-2S ferredoxin-type domain maps to 7 to 93; sequence MEAIMYVNGV…GMHVISIEGV (87 aa). [2Fe-2S] cluster contacts are provided by Cys-45, Cys-50, Cys-53, Cys-75, Cys-115, Cys-118, Cys-151, and Cys-153. The FAD-binding PCMH-type domain occupies 249 to 434; that stretch reads GGNEGITWYR…LSVFLPWTRP (186 aa). FAD is bound by residues 277 to 284, Phe-357, 367 to 371, Asp-380, Leu-424, and Lys-442; these read LLVGNTEV and CIGGN. Residues Gln-788 and Phe-819 each contribute to the Mo-molybdopterin site. Substrate contacts are provided by Glu-823 and Arg-901. Arg-933 contributes to the Mo-molybdopterin binding site. 2 residues coordinate substrate: Phe-935 and Thr-1031. Ala-1100 is a binding site for Mo-molybdopterin. Glu-1289 functions as the Proton acceptor in the catalytic mechanism.

Belongs to the xanthine dehydrogenase family. As to quaternary structure, homodimer. [2Fe-2S] cluster is required as a cofactor. FAD serves as cofactor. It depends on Mo-molybdopterin as a cofactor. Expressed in roots, leaves, stems, flowers and siliques.

The enzyme catalyses xanthine + NAD(+) + H2O = urate + NADH + H(+). It catalyses the reaction hypoxanthine + NAD(+) + H2O = xanthine + NADH + H(+). Key enzyme involved in purine catabolism. Catalyzes the oxidation of hypoxanthine to xanthine and the oxidation of xanthine to urate. Regulates the level of ureides and plays a role during plant growth and development and senescence. The protein is Xanthine dehydrogenase 2 (XDH2) of Arabidopsis thaliana (Mouse-ear cress).